Reading from the N-terminus, the 915-residue chain is Scaffold attachment factor B1 (915 aa).

Residues 1–24 are compositionally biased toward low complexity; the sequence is MAETLSGLGDSGAAGAAALSSASS. The tract at residues 1-33 is disordered; that stretch reads MAETLSGLGDSGAAGAAALSSASSETGTRRLSD. Ala2 carries the N-acetylalanine modification. Residues Ser24 and Ser55 each carry the phosphoserine modification. In terms of domain architecture, SAP spans 31-65; that stretch reads LSDLRVIDLRAELRKRNVDSSGNKSVLMERLKKAI. The segment at 64-118 is disordered; sequence AIEDEGGNPDEIEITSEGNKKTSKRSSKGRKPEEEGVEDNGLEENSGDGQEDVET. The span at 67–77 shows a compositional bias: acidic residues; the sequence is DEGGNPDEIEI. Residue Ser79 is modified to Phosphoserine. Residues 98–118 are compositionally biased toward acidic residues; it reads EGVEDNGLEENSGDGQEDVET. Glycyl lysine isopeptide (Lys-Gly) (interchain with G-Cter in SUMO2) cross-links involve residues Lys172 and Lys186. At Thr188 the chain carries Phosphothreonine. Phosphoserine is present on residues Ser195, Ser197, and Ser209. A disordered region spans residues 221–407; that stretch reads LGETCKSEPV…EKGRSSCGRN (187 aa). Basic and acidic residues predominate over residues 225–234; it reads CKSEPVKEES. A Glycyl lysine isopeptide (Lys-Gly) (interchain with G-Cter in SUMO) cross-link involves residue Lys231. Residues 275 to 286 are compositionally biased toward polar residues; sequence SESTAHAQSSKA. A compositionally biased stretch (basic and acidic residues) spans 293-309; it reads VKREPAEQPGDGERTDC. Lys294 is covalently cross-linked (Glycyl lysine isopeptide (Lys-Gly) (interchain with G-Cter in SUMO)). The segment covering 319–330 has biased composition (low complexity); sequence EQSSAASELAEA. A compositionally biased stretch (basic and acidic residues) spans 346-359; the sequence is EARDSKEDGRKFDF. The span at 371 to 383 shows a compositional bias: polar residues; it reads ESSTSEGADQKMS. Lys381 is covalently cross-linked (Glycyl lysine isopeptide (Lys-Gly) (interchain with G-Cter in SUMO2)). Ser383 and Ser384 each carry phosphoserine. Residues 390–401 are compositionally biased toward basic and acidic residues; it reads DTKRLSKEEKGR. Lys392 participates in a covalent cross-link: Glycyl lysine isopeptide (Lys-Gly) (interchain with G-Cter in SUMO2). In terms of domain architecture, RRM spans 406–484; the sequence is RNFWVSGLSS…KMISVEKAKN (79 aa). Ser415 is subject to Phosphoserine. Composition is skewed to basic and acidic residues over residues 477-551 and 559-570; these read ISVE…ERSR and GTERTVVMDKSK. Disordered regions lie at residues 477 to 641, 671 to 708, and 749 to 915; these read ISVE…EREE, RERM…ERRP, and FDHR…TRRY. Glycyl lysine isopeptide (Lys-Gly) (interchain with G-Cter in SUMO2) cross-links involve residues Lys483, Lys514, Lys543, and Lys570. An interaction with POLR2A. Interaction with SFRS1; SFRS9 and SFRS10 region spans residues 528 to 792; it reads GDDGSGEKSK…RHGGPERHGR (265 aa). Lys578 participates in a covalent cross-link: Glycyl lysine isopeptide (Lys-Gly) (interchain with G-Cter in SUMO1); alternate. A Glycyl lysine isopeptide (Lys-Gly) (interchain with G-Cter in SUMO2); alternate cross-link involves residue Lys578. Residues Ser580, Ser582, Ser601, and Ser604 each carry the phosphoserine modification. Residues 581 to 641 show a composition bias toward basic and acidic residues; sequence GSKERASKSQ…RMQAQWEREE (61 aa). Residues 599–616 carry the Nuclear localization signal motif; the sequence is KRSVVSFDKVKEPRKSRD. Residues 599 to 915 are interaction with SAFB2; sequence KRSVVSFDKV…PSDARFTRRY (317 aa). Residue Lys607 is modified to N6-acetyllysine. Over residues 749–796 the composition is skewed to basic and acidic residues; sequence FDHRDRGRYPDHSVDRREGSRSMMGEREGQHYPERHGGPERHGRDSRD. Position 811 is an omega-N-methylarginine (Arg811). Basic and acidic residues-rich tracts occupy residues 817-832 and 841-851; these read PRRD…DDRS and MMDRDHKRWQG. Lys847 participates in a covalent cross-link: Glycyl lysine isopeptide (Lys-Gly) (interchain with G-Cter in SUMO2). Residues Arg868, Arg874, and Arg884 each carry the asymmetric dimethylarginine modification. A compositionally biased stretch (gly residues) spans 892–901; the sequence is GMQGGFGGQS. A compositionally biased stretch (basic and acidic residues) spans 905-915; the sequence is RPSDARFTRRY.

As to quaternary structure, monomer and homodimer. Forms heterodimers with SAFB2. Interacts with KHDRBS3. Interacts with CLK2. Interacts with POLR2A, SRSF1/ASF, SRSF9/SRp30c and SFSF10/TRA2B. Interacts with isoform 1 and isoform 2 of SRPK1 and inhibits its activity. Interacts with RBMX. Interacts with FUS. Interacts with ZBED4. Sumoylated by PIAS1 with SUMO1 and SUMO2/3, desumoylated by SENP1. Sumoylation is required for transcriptional repressor activity. As to expression, ubiquitous. Expressed at high levels in the CNS and at low levels in the liver. Expressed in a wide number of breast cancer cell lines.

Its subcellular location is the nucleus. Binds to scaffold/matrix attachment region (S/MAR) DNA and forms a molecular assembly point to allow the formation of a 'transcriptosomal' complex (consisting of SR proteins and RNA polymerase II) coupling transcription and RNA processing. Functions as an estrogen receptor corepressor and can also bind to the HSP27 promoter and decrease its transcription. Thereby acts as a negative regulator of cell proliferation. When associated with RBMX, binds to and stimulates transcription from the SREBF1 promoter. This Homo sapiens (Human) protein is Scaffold attachment factor B1 (SAFB).